Consider the following 339-residue polypeptide: Ketol-acid reductoisomerase (NADP(+)) (339 aa).

The KARI N-terminal Rossmann domain maps to 1-182; the sequence is MRVYYDRDAD…GGGRAGIIET (182 aa). NADP(+) contacts are provided by residues 24-27, Arg48, Ser51, Ser53, and 83-86; these read YGSQ and DELQ. His108 is an active-site residue. An NADP(+)-binding site is contributed by Gly134. Positions 183–328 constitute a KARI C-terminal knotted domain; that stretch reads TFREECETDL…ARLRDMMPWI (146 aa). The Mg(2+) site is built by Asp191, Glu195, Glu227, and Glu231. Substrate is bound at residue Ser252.

It belongs to the ketol-acid reductoisomerase family. Mg(2+) serves as cofactor.

The enzyme catalyses (2R)-2,3-dihydroxy-3-methylbutanoate + NADP(+) = (2S)-2-acetolactate + NADPH + H(+). It catalyses the reaction (2R,3R)-2,3-dihydroxy-3-methylpentanoate + NADP(+) = (S)-2-ethyl-2-hydroxy-3-oxobutanoate + NADPH + H(+). The protein operates within amino-acid biosynthesis; L-isoleucine biosynthesis; L-isoleucine from 2-oxobutanoate: step 2/4. It participates in amino-acid biosynthesis; L-valine biosynthesis; L-valine from pyruvate: step 2/4. Its function is as follows. Involved in the biosynthesis of branched-chain amino acids (BCAA). Catalyzes an alkyl-migration followed by a ketol-acid reduction of (S)-2-acetolactate (S2AL) to yield (R)-2,3-dihydroxy-isovalerate. In the isomerase reaction, S2AL is rearranged via a Mg-dependent methyl migration to produce 3-hydroxy-3-methyl-2-ketobutyrate (HMKB). In the reductase reaction, this 2-ketoacid undergoes a metal-dependent reduction by NADPH to yield (R)-2,3-dihydroxy-isovalerate. The sequence is that of Ketol-acid reductoisomerase (NADP(+)) from Nitrobacter winogradskyi (strain ATCC 25391 / DSM 10237 / CIP 104748 / NCIMB 11846 / Nb-255).